A 196-amino-acid chain; its full sequence is Heat shock protein beta-8 (196 aa).

The segment at 1–35 (MADGQMPFSCHYPSRLRRDPFRDSPLPSRLLDDDF) is disordered. Serine 24 and serine 57 each carry phosphoserine. Residue threonine 63 is modified to Phosphothreonine. Asymmetric dimethylarginine is present on residues arginine 71 and arginine 78. In terms of domain architecture, sHSP spans 74–185 (TAAARFGVPA…PFGESNFNNE (112 aa)). Residue serine 87 is modified to Phosphoserine. Residues 176–196 (PFGESNFNNELPQDSQEVTCT) are disordered. Positions 178–196 (GESNFNNELPQDSQEVTCT) are enriched in polar residues.

The protein belongs to the small heat shock protein (HSP20) family. In terms of assembly, monomer. Forms a ternary complex with BAG3 and HSPA1A. Component of the chaperone-assisted selective autophagy (CASA) complex consisting of BAG3, HSPA8/HSC70, HSPB8 and STUB1/CHIP. Interacts with HSPB1. Interacts with DNAJB6. Interacts with BAG3. In terms of processing, phosphorylated.

It localises to the cytoplasm. Its subcellular location is the nucleus. In terms of biological role, involved in the chaperone-assisted selective autophagy (CASA), a crucial process for protein quality control, particularly in mechanical strained cells and tissues such as muscle. Displays temperature-dependent chaperone activity. The protein is Heat shock protein beta-8 (HSPB8) of Canis lupus familiaris (Dog).